A 420-amino-acid polypeptide reads, in one-letter code: Septin-8-A (420 aa).

In terms of domain architecture, Septin-type G spans 39–305 (QGFCFNILCV…ELYRRCKLEE (267 aa)). Residues 49–56 (GETGIGKS) are G1 motif. GTP contacts are provided by residues 49–56 (GETGIGKS), glycine 104, 185–193 (KADTISKSE), glycine 239, and arginine 254. The interval 101 to 104 (DTVG) is G3 motif. Positions 184–187 (AKAD) are G4 motif. A coiled-coil region spans residues 321-407 (QETYEAKRKE…RRKVAAETLS (87 aa)). Residues 393–420 (MNAFNRRKVAAETLSLSQPLKKDKDKKN) are disordered.

It belongs to the TRAFAC class TrmE-Era-EngA-EngB-Septin-like GTPase superfamily. Septin GTPase family.

The polypeptide is Septin-8-A (sept8a) (Danio rerio (Zebrafish)).